The following is a 78-amino-acid chain: Acyl carrier protein (78 aa).

The Carrier domain maps to 2 to 77 (STIEERVKKI…AAIDYVKAHQ (76 aa)). Ser37 bears the O-(pantetheine 4'-phosphoryl)serine mark.

The protein belongs to the acyl carrier protein (ACP) family. Post-translationally, 4'-phosphopantetheine is transferred from CoA to a specific serine of apo-ACP by AcpS. This modification is essential for activity because fatty acids are bound in thioester linkage to the sulfhydryl of the prosthetic group.

The protein localises to the cytoplasm. Its pathway is lipid metabolism; fatty acid biosynthesis. Its function is as follows. Carrier of the growing fatty acid chain in fatty acid biosynthesis. The chain is Acyl carrier protein from Pseudomonas putida (strain ATCC 47054 / DSM 6125 / CFBP 8728 / NCIMB 11950 / KT2440).